Reading from the N-terminus, the 615-residue chain is Peptidoglycan-binding protein YepA (615 aa).

The signal sequence occupies residues 1 to 26 (MRNLAALLPALFLLGSSLLPAGTALA).

Belongs to the bacterial solute-binding protein 5 family. In terms of assembly, the complex is composed of one ATP-binding protein (YejF), two transmembrane proteins (YejB and YejE) and a solute-binding protein (YepA).

Its subcellular location is the periplasm. Functionally, part of the ABC transporter complex YejBEF-YepA involved in the uptake of muropeptides, the breakdown products of cell wall peptidoglycan. The import of muropeptides into the cell enables peptidoglycan recycling, which is vital for cell wall integrity in this bacterium. Probably binds muropeptides. This Agrobacterium fabrum (strain C58 / ATCC 33970) (Agrobacterium tumefaciens (strain C58)) protein is Peptidoglycan-binding protein YepA.